Consider the following 108-residue polypeptide: BH3-like motif-containing cell death inducer (108 aa).

The BH3-like motif lies at Leu-5–Ile-12.

As to expression, ubiquitously expressed.

It localises to the cytoplasm. The protein localises to the mitochondrion. In terms of biological role, functions as a proapoptotic molecule through the caspase-dependent mitochondrial pathway of cell death. In Homo sapiens (Human), this protein is BH3-like motif-containing cell death inducer (BLID).